The chain runs to 644 residues: DNA gyrase subunit B (644 aa).

One can recognise a Toprim domain in the interval 429–543 (CEIFLVEGDS…AGYVYIAQPP (115 aa)). Mg(2+)-binding residues include E435, D508, and D510.

This sequence belongs to the type II topoisomerase GyrB family. Heterotetramer, composed of two GyrA and two GyrB chains. In the heterotetramer, GyrA contains the active site tyrosine that forms a transient covalent intermediate with DNA, while GyrB binds cofactors and catalyzes ATP hydrolysis. The cofactor is Mg(2+). Mn(2+) serves as cofactor. Requires Ca(2+) as cofactor.

Its subcellular location is the cytoplasm. It catalyses the reaction ATP-dependent breakage, passage and rejoining of double-stranded DNA.. Functionally, a type II topoisomerase that negatively supercoils closed circular double-stranded (ds) DNA in an ATP-dependent manner to modulate DNA topology and maintain chromosomes in an underwound state. Negative supercoiling favors strand separation, and DNA replication, transcription, recombination and repair, all of which involve strand separation. Also able to catalyze the interconversion of other topological isomers of dsDNA rings, including catenanes and knotted rings. Type II topoisomerases break and join 2 DNA strands simultaneously in an ATP-dependent manner. This Staphylococcus aureus (strain Mu50 / ATCC 700699) protein is DNA gyrase subunit B.